The sequence spans 245 residues: 2,3-bisphosphoglycerate-dependent phosphoglycerate mutase (245 aa).

Substrate contacts are provided by residues 8–15, 21–22, Arg60, 87–90, Lys98, 114–115, and 183–184; these read RHGQSLWN, TG, ERHY, RR, and GN. His9 (tele-phosphohistidine intermediate) is an active-site residue. Glu87 (proton donor/acceptor) is an active-site residue.

The protein belongs to the phosphoglycerate mutase family. BPG-dependent PGAM subfamily.

The enzyme catalyses (2R)-2-phosphoglycerate = (2R)-3-phosphoglycerate. The protein operates within carbohydrate degradation; glycolysis; pyruvate from D-glyceraldehyde 3-phosphate: step 3/5. In terms of biological role, catalyzes the interconversion of 2-phosphoglycerate and 3-phosphoglycerate. The protein is 2,3-bisphosphoglycerate-dependent phosphoglycerate mutase of Bacillus cereus (strain G9842).